Reading from the N-terminus, the 58-residue chain is ATP synthase F(0) complex subunit k, mitochondrial (58 aa).

N6-acetyllysine; partial is present on residues lysine 16 and lysine 17. The helical transmembrane segment at 23 to 45 (TLTGRMNCVLATYGSIALIVLYF) threads the bilayer.

In terms of assembly, component of the ATP synthase complex composed at least of ATP5F1A/subunit alpha, ATP5F1B/subunit beta, ATP5MC1/subunit c (homooctomer), MT-ATP6/subunit a, MT-ATP8/subunit 8, ATP5ME/subunit e, ATP5MF/subunit f, ATP5MG/subunit g, ATP5MK/subunit k, ATP5MJ/subunit j, ATP5F1C/subunit gamma, ATP5F1D/subunit delta, ATP5F1E/subunit epsilon, ATP5PF/subunit F6, ATP5PB/subunit b, ATP5PD/subunit d, ATP5PO/subunit OSCP. ATP synthase complex consists of a soluble F(1) head domain (subunits alpha(3) and beta(3)) - the catalytic core - and a membrane F(0) domain - the membrane proton channel (subunits c, a, 8, e, f, g, k and j). These two domains are linked by a central stalk (subunits gamma, delta, and epsilon) rotating inside the F1 region and a stationary peripheral stalk (subunits F6, b, d, and OSCP). The ATP synthase complex/complex V exists as a monomeric and a dimeric supercomplex that helps shape mitochondrial cristae to optimize proton flow.

It localises to the mitochondrion membrane. Functionally, subunit k, of the mitochondrial membrane ATP synthase complex (F(1)F(0) ATP synthase or Complex V) that produces ATP from ADP in the presence of a proton gradient across the membrane which is generated by electron transport complexes of the respiratory chain. ATP synthase complex consist of a soluble F(1) head domain - the catalytic core - and a membrane F(1) domain - the membrane proton channel. These two domains are linked by a central stalk rotating inside the F(1) region and a stationary peripheral stalk. During catalysis, ATP synthesis in the catalytic domain of F(1) is coupled via a rotary mechanism of the central stalk subunits to proton translocation. In vivo, can only synthesize ATP although its ATP hydrolase activity can be activated artificially in vitro. Part of the complex F(0) domain. Required for dimerization of the ATP synthase complex and as such regulates ATP synthesis in the mitochondria. The chain is ATP synthase F(0) complex subunit k, mitochondrial from Bos taurus (Bovine).